The chain runs to 241 residues: Ubiquinone biosynthesis O-methyltransferase (241 aa).

Arg-46, Gly-66, Asp-87, and Met-131 together coordinate S-adenosyl-L-methionine.

It belongs to the methyltransferase superfamily. UbiG/COQ3 family.

It catalyses the reaction a 3-demethylubiquinol + S-adenosyl-L-methionine = a ubiquinol + S-adenosyl-L-homocysteine + H(+). The enzyme catalyses a 3-(all-trans-polyprenyl)benzene-1,2-diol + S-adenosyl-L-methionine = a 2-methoxy-6-(all-trans-polyprenyl)phenol + S-adenosyl-L-homocysteine + H(+). It participates in cofactor biosynthesis; ubiquinone biosynthesis. Its function is as follows. O-methyltransferase that catalyzes the 2 O-methylation steps in the ubiquinone biosynthetic pathway. The protein is Ubiquinone biosynthesis O-methyltransferase of Bordetella avium (strain 197N).